The following is a 150-amino-acid chain: Large ribosomal subunit protein uL23m (150 aa).

It belongs to the universal ribosomal protein uL23 family. As to quaternary structure, component of the mitochondrial ribosome large subunit (39S) which comprises a 16S rRNA and about 50 distinct proteins.

It is found in the mitochondrion. The chain is Large ribosomal subunit protein uL23m (mRpL23) from Drosophila melanogaster (Fruit fly).